We begin with the raw amino-acid sequence, 257 residues long: 1-(5-phosphoribosyl)-5-[(5-phosphoribosylamino)methylideneamino] imidazole-4-carboxamide isomerase (257 aa).

Residue Asp-8 is the Proton acceptor of the active site. Asp-129 serves as the catalytic Proton donor.

It belongs to the HisA/HisF family.

Its subcellular location is the cytoplasm. The enzyme catalyses 1-(5-phospho-beta-D-ribosyl)-5-[(5-phospho-beta-D-ribosylamino)methylideneamino]imidazole-4-carboxamide = 5-[(5-phospho-1-deoxy-D-ribulos-1-ylimino)methylamino]-1-(5-phospho-beta-D-ribosyl)imidazole-4-carboxamide. It participates in amino-acid biosynthesis; L-histidine biosynthesis; L-histidine from 5-phospho-alpha-D-ribose 1-diphosphate: step 4/9. In Cyanothece sp. (strain PCC 7425 / ATCC 29141), this protein is 1-(5-phosphoribosyl)-5-[(5-phosphoribosylamino)methylideneamino] imidazole-4-carboxamide isomerase.